We begin with the raw amino-acid sequence, 308 residues long: Glycine--tRNA ligase alpha subunit (308 aa).

The protein belongs to the class-II aminoacyl-tRNA synthetase family. Tetramer of two alpha and two beta subunits.

It is found in the cytoplasm. The catalysed reaction is tRNA(Gly) + glycine + ATP = glycyl-tRNA(Gly) + AMP + diphosphate. The sequence is that of Glycine--tRNA ligase alpha subunit from Polaromonas naphthalenivorans (strain CJ2).